Here is a 422-residue protein sequence, read N- to C-terminus: Aspartate--tRNA(Asp/Asn) ligase (422 aa).

E158 is an L-aspartate binding site. Positions 180 to 183 (QLYK) are aspartate. L-aspartate is bound at residue R201. Residues 201 to 203 (RME), 209 to 211 (RHL), and E345 each bind ATP. The L-aspartate site is built by S348 and R352. An ATP-binding site is contributed by 393–396 (GAER).

It belongs to the class-II aminoacyl-tRNA synthetase family. Type 2 subfamily. Homodimer. Makes part of a ribonucleoprotein particle (RNP) called transamidosome that allows channelling of the aa-tRNA from non-discriminating aspartyl-tRNA synthetase active site to the GatCAB amidotransferase site. The transamidosome complex is formed by two GatCABs, one dimeric ND-AspRSs and two tRNAs(Asn) molecules.

It is found in the cytoplasm. It catalyses the reaction tRNA(Asx) + L-aspartate + ATP = L-aspartyl-tRNA(Asx) + AMP + diphosphate. Its function is as follows. Aspartyl-tRNA synthetase with relaxed tRNA specificity since it is able to aspartylate not only its cognate tRNA(Asp) but also tRNA(Asn) with similar efficiencies. Reaction proceeds in two steps: L-aspartate is first activated by ATP to form Asp-AMP and then transferred to the acceptor end of tRNA(Asp/Asn). This Thermus thermophilus (strain ATCC 27634 / DSM 579 / HB8) protein is Aspartate--tRNA(Asp/Asn) ligase (aspS2).